The sequence spans 557 residues: Probable protein kinase UbiB (557 aa).

The Protein kinase domain maps to 121–509 (SFDTVPLASA…RKLQTRVVTA (389 aa)). ATP-binding positions include 127–135 (LASASIAQV) and Lys154. The Proton acceptor role is filled by Asp289. 2 helical membrane-spanning segments follow: residues 506-526 (VVTA…YGLH) and 535-555 (VPVW…VAWL).

It belongs to the ABC1 family. UbiB subfamily.

The protein localises to the cell inner membrane. Its pathway is cofactor biosynthesis; ubiquinone biosynthesis [regulation]. In terms of biological role, is probably a protein kinase regulator of UbiI activity which is involved in aerobic coenzyme Q (ubiquinone) biosynthesis. The sequence is that of Probable protein kinase UbiB from Xanthomonas euvesicatoria pv. vesicatoria (strain 85-10) (Xanthomonas campestris pv. vesicatoria).